The chain runs to 648 residues: Pumilio homolog 3 (648 aa).

A disordered region spans residues 1–124; that stretch reads MEVKGKKQFT…KKKKELKQSR (124 aa). Over residues 17–27 the composition is skewed to basic and acidic residues; it reads AQEKNRFHKNS. Lysine 33 bears the N6-acetyllysine mark. Residues 60–69 are compositionally biased toward basic residues; it reads LGKKGVKQFK. Positions 94 to 124 are enriched in basic and acidic residues; the sequence is FQPDGRSDESAAKKPKWDDFKKKKKELKQSR. The Nuclear localization signal signature appears at 106-118; it reads KKPKWDDFKKKKK. The region spanning 143–510 is the PUM-HD domain; sequence EILRRKDCDK…VVLDKSACVL (368 aa). Pumilio repeat units follow at residues 177–212, 213–248, 249–277, 289–325, 326–361, 362–397, 398–435, 436–504, 505–551, 552–596, and 597–636; these read HDST…LSKA, KYSR…MLRH, AEAS…ELYG, RTLD…VIKH, SLVH…LAHT, HDGA…VANG, QYSH…IVND, KYGR…VVLD, KSAC…IAEH, PAGH…WASV, and NRGA…KSTS. The HA-8 stretch occupies residues 289–297; the sequence is RTLDKVLEV.

Interacts with PARP1 (via catalytic domain). In terms of tissue distribution, widely expressed.

The protein localises to the nucleus. It is found in the nucleolus. Its subcellular location is the nucleoplasm. It localises to the chromosome. In terms of biological role, inhibits the poly(ADP-ribosyl)ation activity of PARP1 and the degradation of PARP1 by CASP3 following genotoxic stress. Binds to double-stranded RNA or DNA without sequence specificity. Involved in development of the eye and of primordial germ cells. This is Pumilio homolog 3 from Homo sapiens (Human).